Consider the following 337-residue polypeptide: Visual pigment-like receptor peropsin (337 aa).

At 1–26 the chain is on the extracellular side; that stretch reads MLSEASDFNSSGSRSEGSVFSRTEHS. Asn-9 carries an N-linked (GlcNAc...) asparagine glycan. Residues 27–49 traverse the membrane as a helical segment; the sequence is VIAAYLIVAGITSILSNVVVLGI. The Cytoplasmic segment spans residues 50–61; that stretch reads FIKYKELRTPTN. A helical transmembrane segment spans residues 62-87; it reads AVIINLAFTDIGVSSIGYPMSAASDL. Residues 88-101 lie on the Extracellular side of the membrane; the sequence is HGSWKFGHAGCQIY. A disulfide bridge connects residues Cys-98 and Cys-175. Residues 102–121 traverse the membrane as a helical segment; sequence AGLNIFFGMVSIGLLTVVAM. The Cytoplasmic portion of the chain corresponds to 122–140; that stretch reads DRYLTISCPDVGRRMTTNT. A helical membrane pass occupies residues 141-164; it reads YLSMILGAWINGLFWALMPIIGWA. Over 165-188 the chain is Extracellular; the sequence is SYAPDPTGATCTINWRNNDTSFVS. A glycan (N-linked (GlcNAc...) asparagine) is linked at Asn-182. The helical transmembrane segment at 189–212 threads the bilayer; the sequence is YTMMVIVVNFIVPLTVMFYCYYHV. At 213-240 the chain is on the cytoplasmic side; sequence SRSLRLYAASDCTAHLHRDWADQADVTK. Residues 241–264 traverse the membrane as a helical segment; the sequence is MSVIMILMFLLAWSPYSIVCLWAC. At 265-272 the chain is on the extracellular side; it reads FGNPKKIP. A helical transmembrane segment spans residues 273-297; the sequence is PSMAIIAPLFAKSSTFYNPCIYVAA. Position 284 is an N6-(retinylidene)lysine (Lys-284). Residues 298-337 lie on the Cytoplasmic side of the membrane; it reads HKKFRKAMLAMFKCQPHLAVPEPSTLPMDMPQSSLAPVRI.

Belongs to the G-protein coupled receptor 1 family. Opsin subfamily. As to expression, found only in the eye, where it is localized to the retinal pigment epithelium (RPE). In the RPE, it is localized to the microvilli that surround the photoreceptor outer segments.

The protein localises to the membrane. In terms of biological role, may play a role in rpe physiology either by detecting light directly or by monitoring the concentration of retinoids or other photoreceptor-derived compounds. This is Visual pigment-like receptor peropsin (Rrh) from Mus musculus (Mouse).